The following is a 134-amino-acid chain: Lymphocyte antigen 6F (134 aa).

The first 26 residues, 1-26, serve as a signal peptide directing secretion; sequence MDSCHTTKSCVLILLVVLLCAERAQG. In terms of domain architecture, UPAR/Ly6 spans 27 to 119; the sequence is LECYNCLGVS…TGGSTWTMTR (93 aa). Intrachain disulfides connect C29-C53, C32-C41, C46-C74, C78-C98, and C99-C104. G112 is lipidated: GPI-anchor amidated glycine. A propeptide spans 113 to 134 (removed in mature form); the sequence is STWTMTRVLLLNLGSVFLQTLL.

The protein resides in the cell membrane. This chain is Lymphocyte antigen 6F (Ly6f), found in Mus musculus (Mouse).